Reading from the N-terminus, the 201-residue chain is Dephospho-CoA kinase (201 aa).

The 198-residue stretch at 4–201 (SVGLTGNIAS…KYLREAKIKQ (198 aa)) folds into the DPCK domain. Residue 12 to 17 (ASGKST) participates in ATP binding.

Belongs to the CoaE family.

Its subcellular location is the cytoplasm. It catalyses the reaction 3'-dephospho-CoA + ATP = ADP + CoA + H(+). It participates in cofactor biosynthesis; coenzyme A biosynthesis; CoA from (R)-pantothenate: step 5/5. Its function is as follows. Catalyzes the phosphorylation of the 3'-hydroxyl group of dephosphocoenzyme A to form coenzyme A. The polypeptide is Dephospho-CoA kinase (Legionella pneumophila (strain Paris)).